The primary structure comprises 525 residues: Glutamate--cysteine ligase (525 aa).

It belongs to the glutamate--cysteine ligase type 1 family. Type 1 subfamily.

It catalyses the reaction L-cysteine + L-glutamate + ATP = gamma-L-glutamyl-L-cysteine + ADP + phosphate + H(+). Its pathway is sulfur metabolism; glutathione biosynthesis; glutathione from L-cysteine and L-glutamate: step 1/2. The protein is Glutamate--cysteine ligase of Pseudomonas putida (strain W619).